We begin with the raw amino-acid sequence, 239 residues long: Ribose-5-phosphate isomerase A (239 aa).

Residues 40-43 (SGST), 96-99 (DGAD), and 110-113 (KGGG) each bind substrate. The active-site Proton acceptor is the glutamate 119. Lysine 137 contacts substrate.

The protein belongs to the ribose 5-phosphate isomerase family. Homodimer.

It carries out the reaction aldehydo-D-ribose 5-phosphate = D-ribulose 5-phosphate. The protein operates within carbohydrate degradation; pentose phosphate pathway; D-ribose 5-phosphate from D-ribulose 5-phosphate (non-oxidative stage): step 1/1. Functionally, catalyzes the reversible conversion of ribose-5-phosphate to ribulose 5-phosphate. The sequence is that of Ribose-5-phosphate isomerase A from Methanococcus maripaludis (strain C6 / ATCC BAA-1332).